The chain runs to 555 residues: Vetispiradiene synthase 1 (555 aa).

Asp308, Asp312, Asp451, Thr455, and Glu459 together coordinate Mg(2+). Positions 308–312 (DDTFD) match the DDXXD motif motif.

It belongs to the terpene synthase family. Tpsa subfamily. Mg(2+) serves as cofactor.

The protein resides in the cytoplasm. It carries out the reaction (2E,6E)-farnesyl diphosphate = (-)-vetispiradiene + diphosphate. The protein operates within secondary metabolite biosynthesis; terpenoid biosynthesis. Sesquiterpene synthase that catalyzes the formation of vetispiradiene from trans,trans-farnesyl diphosphate. The initial internal cyclization produces the monocyclic intermediate germacrene A. This Hyoscyamus muticus (Egyptian henbane) protein is Vetispiradiene synthase 1.